Here is a 501-residue protein sequence, read N- to C-terminus: Dipeptide and tripeptide permease A (501 aa).

At 1-21 (MSTANKKPTESVSLNAFKQPK) the chain is on the cytoplasmic side. A helical membrane pass occupies residues 22-44 (AFYLIFSIELWERFGYYGLQGIM). Topologically, residues 45 to 59 (AVYLVKQLGMSEADS) are periplasmic. Residues 60–80 (ITLFSSFSALVYGLVAIGGWL) traverse the membrane as a helical segment. Over 81–89 (GDKILGTKR) the chain is Cytoplasmic. The helical transmembrane segment at 90–110 (VIMLGAVVLAIGYALVAWSGH) threads the bilayer. A topological domain (periplasmic) is located at residue Asp-111. The helical transmembrane segment at 112–132 (AGIVYMGMAAIAVGNGLFKAN) threads the bilayer. Over 133–153 (PSSLLSTCYAKDDPRLDGAFT) the chain is Cytoplasmic. A helical transmembrane segment spans residues 154–174 (MYYMSVNIGSFFSMLATPWLA). Residues 175–178 (ARYG) are Periplasmic-facing. The chain crosses the membrane as a helical span at residues 179–199 (WSTAFALSVVGMLITVVNFAF). The Cytoplasmic segment spans residues 200–219 (CQRWVKSYGSKPDFEPINFR). The chain crosses the membrane as a helical span at residues 220–240 (NLLLTIVGIVVLIAVATWLLH). Topologically, residues 241–246 (NQDIAR) are periplasmic. Residues 247–267 (MVLGVIALGIVIIFGKEAFSM) form a helical membrane-spanning segment. Residues 268 to 274 (HGAARRK) lie on the Cytoplasmic side of the membrane. Residues 275-295 (MIVAFILMLQAIIFFVLYSQM) form a helical membrane-spanning segment. At 296 to 320 (PTSLNFFAIRNVEHSILGIAFEPEQ) the chain is on the periplasmic side. The helical transmembrane segment at 321–341 (YQALNPFWIIIGSPILAAIYN) threads the bilayer. Residues 342 to 352 (RMGDTLPMPMK) lie on the Cytoplasmic side of the membrane. A helical transmembrane segment spans residues 353-373 (FAIGMVLCSGAFLILPLGAKF). The Periplasmic segment spans residues 374–383 (ANDAGIVSVN). A helical transmembrane segment spans residues 384-404 (WLIASYGLQSIGELMISGLGL). The Cytoplasmic segment spans residues 405 to 414 (AMVAQLVPQR). Residues 415 to 435 (LMGFIMGSWFLTTAGANIIGG) form a helical membrane-spanning segment. At 436–459 (YVANLMAVPSDVTDPLMSLEVYGR) the chain is on the periplasmic side. The chain crosses the membrane as a helical span at residues 460–480 (VFMQIGIATAVIAVLMLLTAP). Residues 481-501 (KLNRMTQDDDTAEKGSKAATV) lie on the Cytoplasmic side of the membrane.

This sequence belongs to the major facilitator superfamily. Proton-dependent oligopeptide transporter (POT/PTR) (TC 2.A.17) family. DtpA subfamily.

It is found in the cell inner membrane. Proton-dependent permease that transports di- and tripeptides. This is Dipeptide and tripeptide permease A from Salmonella typhimurium (strain LT2 / SGSC1412 / ATCC 700720).